A 293-amino-acid chain; its full sequence is ADP-forming sulfoacetate-CoA ligase subunit SauD (293 aa).

CoA contacts are provided by residues 17–20, Lys43, and 96–98; these read TGKE and IAD. The active-site Tele-phosphohistidine intermediate is His251.

Belongs to the succinate/malate CoA ligase alpha subunit family. In terms of assembly, forms a complex with SauC.

The catalysed reaction is sulfoacetate + ATP + CoA = sulfoacetyl-CoA + ADP + phosphate. Its function is as follows. Involved in the degradation of sulfoacetate. Catalyzes the CoA- and ATP-dependent conversion of sulfoacetate to sulfoacetyl-CoA and ADP. Cannot use other sulfonic and carboxylic acids, and shows only residual activity with 3-sulfopropanoate and malonic acid. The protein is ADP-forming sulfoacetate-CoA ligase subunit SauD of Bilophila wadsworthia (strain 3_1_6).